The primary structure comprises 149 residues: Deoxyuridine 5'-triphosphate nucleotidohydrolase (149 aa).

Substrate-binding positions include 68–70, N81, 85–87, and M95; these read RSG and LID.

The protein belongs to the dUTPase family. It depends on Mg(2+) as a cofactor.

The enzyme catalyses dUTP + H2O = dUMP + diphosphate + H(+). Its pathway is pyrimidine metabolism; dUMP biosynthesis; dUMP from dCTP (dUTP route): step 2/2. This enzyme is involved in nucleotide metabolism: it produces dUMP, the immediate precursor of thymidine nucleotides and it decreases the intracellular concentration of dUTP so that uracil cannot be incorporated into DNA. This Bordetella avium (strain 197N) protein is Deoxyuridine 5'-triphosphate nucleotidohydrolase.